The primary structure comprises 141 residues: Hemoglobin subunit alpha-D (141 aa).

The region spanning 1-141 is the Globin domain; it reads MLTADDKKLL…VAAVLAEKYR (141 aa). Heme b contacts are provided by His58 and His87.

Belongs to the globin family. In terms of assembly, heterotetramer of two alpha-D chains and two beta chains. In terms of tissue distribution, red blood cells.

In terms of biological role, involved in oxygen transport from the lung to the various peripheral tissues. This Anser anser anser (Western greylag goose) protein is Hemoglobin subunit alpha-D (HBAD).